The primary structure comprises 318 residues: Protoheme IX farnesyltransferase (318 aa).

The next 9 helical transmembrane spans lie at 34–54, 55–75, 95–115, 118–138, 155–175, 182–202, 228–250, 254–273, and 287–307; these read VMSLVVFTAFAGLVLAPGQIN, PVIGFIAILCIAIGAGASGAL, IPAGKILPQEALAFGLTLSAF, IILGLAVNWLAAGLLAFTIFF, IVIGGAAGAFPPMIGWACVTG, IVLFLIIFLWTPAHFWALALF, IVVYALLTALSGICPTLLGFASL, AFATALGLGFIWYSLAVLRM, and FAFSIAYLFAIFSALLVDYMI.

Belongs to the UbiA prenyltransferase family. Protoheme IX farnesyltransferase subfamily.

The protein localises to the cell inner membrane. The enzyme catalyses heme b + (2E,6E)-farnesyl diphosphate + H2O = Fe(II)-heme o + diphosphate. Its pathway is porphyrin-containing compound metabolism; heme O biosynthesis; heme O from protoheme: step 1/1. Its function is as follows. Converts heme B (protoheme IX) to heme O by substitution of the vinyl group on carbon 2 of heme B porphyrin ring with a hydroxyethyl farnesyl side group. This is Protoheme IX farnesyltransferase from Sinorhizobium fredii (strain NBRC 101917 / NGR234).